Here is a 181-residue protein sequence, read N- to C-terminus: Bifunctional protein PyrR (181 aa).

The PRPP-binding motif lies at 101-113 (VILVDDVLFTGRT).

Belongs to the purine/pyrimidine phosphoribosyltransferase family. PyrR subfamily.

The enzyme catalyses UMP + diphosphate = 5-phospho-alpha-D-ribose 1-diphosphate + uracil. Functionally, regulates the transcription of the pyrimidine nucleotide (pyr) operon in response to exogenous pyrimidines. Also displays a weak uracil phosphoribosyltransferase activity which is not physiologically significant. This chain is Bifunctional protein PyrR, found in Desulfosudis oleivorans (strain DSM 6200 / JCM 39069 / Hxd3) (Desulfococcus oleovorans).